Here is a 220-residue protein sequence, read N- to C-terminus: 7-cyano-7-deazaguanine synthase (220 aa).

11 to 21 (VSGGMDSVTLM) contacts ATP. Residues C186, C194, C197, and C200 each contribute to the Zn(2+) site.

Belongs to the QueC family. Zn(2+) serves as cofactor.

The enzyme catalyses 7-carboxy-7-deazaguanine + NH4(+) + ATP = 7-cyano-7-deazaguanine + ADP + phosphate + H2O + H(+). It functions in the pathway purine metabolism; 7-cyano-7-deazaguanine biosynthesis. In terms of biological role, catalyzes the ATP-dependent conversion of 7-carboxy-7-deazaguanine (CDG) to 7-cyano-7-deazaguanine (preQ(0)). In Porphyromonas gingivalis (strain ATCC 33277 / DSM 20709 / CIP 103683 / JCM 12257 / NCTC 11834 / 2561), this protein is 7-cyano-7-deazaguanine synthase.